The primary structure comprises 334 residues: Ornithine carbamoyltransferase (334 aa).

Carbamoyl phosphate contacts are provided by residues Ser57–Thr60, Gln84, Arg108, and His135–Gln138. Residues Asn169, Asp233, and Ser237–Met238 each bind L-ornithine. Carbamoyl phosphate-binding positions include Cys275–Leu276 and Arg320.

It belongs to the aspartate/ornithine carbamoyltransferase superfamily. OTCase family.

The protein resides in the cytoplasm. The enzyme catalyses carbamoyl phosphate + L-ornithine = L-citrulline + phosphate + H(+). Its pathway is amino-acid biosynthesis; L-arginine biosynthesis; L-arginine from L-ornithine and carbamoyl phosphate: step 1/3. Reversibly catalyzes the transfer of the carbamoyl group from carbamoyl phosphate (CP) to the N(epsilon) atom of ornithine (ORN) to produce L-citrulline. The protein is Ornithine carbamoyltransferase of Vibrio parahaemolyticus serotype O3:K6 (strain RIMD 2210633).